Reading from the N-terminus, the 190-residue chain is Xanthine phosphoribosyltransferase (190 aa).

Residues leucine 20 and asparagine 27 each coordinate xanthine. 128 to 132 (ANGKA) contacts 5-phospho-alpha-D-ribose 1-diphosphate. Position 156 (lysine 156) interacts with xanthine.

The protein belongs to the purine/pyrimidine phosphoribosyltransferase family. Xpt subfamily. In terms of assembly, homodimer.

Its subcellular location is the cytoplasm. The enzyme catalyses XMP + diphosphate = xanthine + 5-phospho-alpha-D-ribose 1-diphosphate. Its pathway is purine metabolism; XMP biosynthesis via salvage pathway; XMP from xanthine: step 1/1. Converts the preformed base xanthine, a product of nucleic acid breakdown, to xanthosine 5'-monophosphate (XMP), so it can be reused for RNA or DNA synthesis. In Pseudomonas fluorescens (strain ATCC BAA-477 / NRRL B-23932 / Pf-5), this protein is Xanthine phosphoribosyltransferase.